Consider the following 1479-residue polypeptide: Putative receptor-type tyrosine-protein phosphatase mosPTP-1 (1479 aa).

Positions Met-1 to Ala-28 are cleaved as a signal peptide. Residues Leu-29–Ala-365 lie on the Extracellular side of the membrane. N-linked (GlcNAc...) asparagine glycosylation is found at Asn-33, Asn-40, Asn-146, Asn-182, Asn-248, Asn-294, and Asn-306. 2 Fibronectin type-III domains span residues Lys-143–Ser-242 and Ala-243–Asn-346. Residues Val-366–Leu-386 traverse the membrane as a helical segment. Residues Trp-387–Glu-1479 are Cytoplasmic-facing. Tyrosine-protein phosphatase domains are found at residues Phe-452 to Ala-717 and Ile-740 to Met-992. Cys-658 functions as the Phosphocysteine intermediate in the catalytic mechanism.

This sequence belongs to the protein-tyrosine phosphatase family. Receptor class subfamily. As to quaternary structure, interacts with C-type lectin mosGCTL-1. Interacts with C-type lectin mosGCTL-7.

It localises to the cell membrane. It catalyses the reaction O-phospho-L-tyrosyl-[protein] + H2O = L-tyrosyl-[protein] + phosphate. Putative protein tyrosine-protein phosphatase. In terms of biological role, (Microbial infection) Facilitates West Nile virus infection in mosquitoes. The chain is Putative receptor-type tyrosine-protein phosphatase mosPTP-1 from Culex quinquefasciatus (Southern house mosquito).